The following is a 653-amino-acid chain: Ran-binding protein 9 (653 aa).

The span at 1-21 (MSGQPPPPPPQQQPPPPPPPA) shows a compositional bias: pro residues. A disordered region spans residues 1-62 (MSGQPPPPPP…SAAAPFPHGD (62 aa)). Low complexity predominate over residues 22–57 (SAAAPATAPPGLAVGPGPAAGVPVPGLAAGSSAAAP). A B30.2/SPRY domain is found at 72-259 (LQRRLKRLYP…VDANFGQHPF (188 aa)). The region spanning 290-322 (WQTMIQKMVSSYLVHHGYCATAEAFARSTDQTV) is the LisH domain. Residues 326 to 332 (LASIKNR) are interaction with CALB1. Residues 328–385 (SIKNRQRIQKLVLAGRMGEAIETTQQLYPSLLERNPNLLFTLKVRQFIEMVNGTDSEV) form the CTLH domain. K330 carries the post-translational modification N6-acetyllysine. The tract at residues 386–422 (RCLGGRSPKSQDSYPVSPRPFSSPSMSPSHGMSIHSL) is disordered. Residues 398 to 421 (SYPVSPRPFSSPSMSPSHGMSIHS) show a composition bias toward low complexity. A phosphoserine mark is found at S402 and S412. The interaction with FMR1 stretch occupies residues 539–653 (AAIERMIHFG…AFATVEDYLH (115 aa)).

The protein belongs to the RANBP9/10 family. In terms of assembly, part of a complex consisting of RANBP9, MKLN1 and GID8. Identified in the CTLH complex that contains GID4, RANBP9 and/or RANBP10, MKLN1, MAEA, RMND5A (or alternatively its paralog RMND5B), GID8, ARMC8, WDR26 and YPEL5. Within this complex, MAEA, RMND5A (or alternatively its paralog RMND5B), GID8, WDR26, and RANBP9 and/or RANBP10 form the catalytic core, while GID4, MKLN1, ARMC8 and YPEL5 have ancillary roles. Interacts with GTP-bound Ran, AR, CDC2L1/p110C, CALB1, S100A7, USP11, SOS1 or SOS2, GID8, and FMR1. Interacts with the Dyrk kinases HIPK2, DYRK1A, and DYRK1B. Interacts with TP73 isoform Alpha but not with TP53. Interacts with the HGF receptor MET and the integrins ITGB1 and ITGB2, but not with ITGAL. Part of a complex consisting of RANBP9, RAN, DYRK1B and COPS5. Directly interacts with RANBP10. Interacts with YPEL5. Interacts with MKLN1. Interacts with DDX4. Interacts with NGFR. Interacts with Tex19.1 and, probably, Tex19.2. In terms of processing, phosphorylated in response to stress. Post-translationally, ubiquitinated. Polyubiquitination targets the protein for rapid degradation via the ubiquitin system. As to expression, ubiquitously expressed, with highest levels in maturating spermatocytes.

The protein resides in the cytoplasm. It is found in the cell membrane. It localises to the nucleus. In terms of biological role, may act as scaffolding protein, and as adapter protein to couple membrane receptors to intracellular signaling pathways. Acts as a mediator of cell spreading and actin cytoskeleton rearrangement. Core component of the CTLH E3 ubiquitin-protein ligase complex that selectively accepts ubiquitin from UBE2H and mediates ubiquitination and subsequent proteasomal degradation of the transcription factor HBP1. May be involved in signaling of ITGB2/LFA-1 and other integrins. Enhances HGF-MET signaling by recruiting Sos and activating the Ras pathway. Enhances dihydrotestosterone-induced transactivation activity of AR, as well as dexamethasone-induced transactivation activity of NR3C1, but not affect estrogen-induced transactivation. Stabilizes TP73 isoform Alpha, probably by inhibiting its ubiquitination, and increases its proapoptotic activity. Inhibits the kinase activity of DYRK1A and DYRK1B. Inhibits FMR1 binding to RNA. The polypeptide is Ran-binding protein 9 (Mus musculus (Mouse)).